The sequence spans 159 residues: ATP synthase subunit b', chloroplastic (159 aa).

The helical transmembrane segment at 30 to 47 (LMALQFLALTIILNLIYY) threads the bilayer.

This sequence belongs to the ATPase B chain family. In terms of assembly, F-type ATPases have 2 components, F(1) - the catalytic core - and F(0) - the membrane proton channel. F(1) has five subunits: alpha(3), beta(3), gamma(1), delta(1), epsilon(1). F(0) has four main subunits: a(1), b(1), b'(1) and c(10-14). The alpha and beta chains form an alternating ring which encloses part of the gamma chain. F(1) is attached to F(0) by a central stalk formed by the gamma and epsilon chains, while a peripheral stalk is formed by the delta, b and b' chains.

The protein resides in the plastid. It localises to the chloroplast thylakoid membrane. Functionally, f(1)F(0) ATP synthase produces ATP from ADP in the presence of a proton or sodium gradient. F-type ATPases consist of two structural domains, F(1) containing the extramembraneous catalytic core and F(0) containing the membrane proton channel, linked together by a central stalk and a peripheral stalk. During catalysis, ATP synthesis in the catalytic domain of F(1) is coupled via a rotary mechanism of the central stalk subunits to proton translocation. In terms of biological role, component of the F(0) channel, it forms part of the peripheral stalk, linking F(1) to F(0). The b'-subunit is a diverged and duplicated form of b found in plants and photosynthetic bacteria. This is ATP synthase subunit b', chloroplastic from Antithamnion sp. (Red alga).